The chain runs to 158 residues: Regulator of G-protein signaling 13 (158 aa).

Residues 34-150 (SLESLMATKY…LKSEMYQQLL (117 aa)) form the RGS domain.

In terms of biological role, inhibits signal transduction by increasing the GTPase activity of G protein alpha subunits thereby driving them into their inactive GDP-bound form. Binds to both G(i)-alpha and G(q)-alpha. The sequence is that of Regulator of G-protein signaling 13 (Rgs13) from Mus musculus (Mouse).